A 261-amino-acid chain; its full sequence is MSANSDVATRVIPCLDVDNGRVVKGVNFENLRDAGDPVELAAAYDAEGADELTFLDVTASSSGRSTMLEVVRRTAEQVFIPLTVGGGVRSVDDVDVLLRAGADKVSVNTAAIARPELLAEMARQFGSQCIVLSVDARTVPKGEQPTPSGWEVTTHGGRRGTGIDAIEWATRGAELGVGEILLNSMDRDGTKAGFDLKMLSAVRAAVSVPVIASGGAGAVEHFAPAVQAGADAVLAASVFHFRELTVAEVKASMKAAGITVR.

Catalysis depends on residues Asp16 and Asp135.

The protein belongs to the HisA/HisF family. In terms of assembly, heterodimer of HisH and HisF.

Its subcellular location is the cytoplasm. The enzyme catalyses 5-[(5-phospho-1-deoxy-D-ribulos-1-ylimino)methylamino]-1-(5-phospho-beta-D-ribosyl)imidazole-4-carboxamide + L-glutamine = D-erythro-1-(imidazol-4-yl)glycerol 3-phosphate + 5-amino-1-(5-phospho-beta-D-ribosyl)imidazole-4-carboxamide + L-glutamate + H(+). Its pathway is amino-acid biosynthesis; L-histidine biosynthesis; L-histidine from 5-phospho-alpha-D-ribose 1-diphosphate: step 5/9. Functionally, IGPS catalyzes the conversion of PRFAR and glutamine to IGP, AICAR and glutamate. The HisF subunit catalyzes the cyclization activity that produces IGP and AICAR from PRFAR using the ammonia provided by the HisH subunit. This Mycolicibacterium smegmatis (strain ATCC 700084 / mc(2)155) (Mycobacterium smegmatis) protein is Imidazole glycerol phosphate synthase subunit HisF.